The following is a 252-amino-acid chain: Probable endonuclease 4 (252 aa).

The Zn(2+) site is built by H56, H96, E129, D162, H165, H191, D204, H206, and E233.

It belongs to the AP endonuclease 2 family. Zn(2+) serves as cofactor.

The enzyme catalyses Endonucleolytic cleavage to 5'-phosphooligonucleotide end-products.. Functionally, endonuclease IV plays a role in DNA repair. It cleaves phosphodiester bonds at apurinic or apyrimidinic (AP) sites, generating a 3'-hydroxyl group and a 5'-terminal sugar phosphate. This is Probable endonuclease 4 from Mycobacterium tuberculosis (strain ATCC 25177 / H37Ra).